The chain runs to 189 residues: Large ribosomal subunit protein eL18 (189 aa).

The protein belongs to the eukaryotic ribosomal protein eL18 family.

It is found in the cytoplasm. The chain is Large ribosomal subunit protein eL18 (RpL18) from Anopheles gambiae (African malaria mosquito).